Consider the following 294-residue polypeptide: MAALQEKKSCSQRMAEFRQYCWNPDTGQMLGRTPARWVWISLYYAAFYVVMTGLFALCIYVLMQTIDPYTPDYQDQLKSPGVTLRPDVYGERGLQISYNISENSSWAGLTHTLHSFLAGYTPASQQDSINCSSEKYFFQETFSAPNHTKFSCKFTADMLQNCSGLVDPSFGFEEGKPCFIIKMNRIVKFLPSNNTAPRVDCTFQDDPQKPRKDIEPLQVQYYPPNGTFSLHYFPYYGKKAQPHYSNPLVAAKFLNVPKNTQVLIVCKIMADHVTFDNPHDPYEGKVEFKLTIQK.

Over 1 to 36 (MAALQEKKSCSQRMAEFRQYCWNPDTGQMLGRTPAR) the chain is Cytoplasmic. Residues 37-57 (WVWISLYYAAFYVVMTGLFAL) traverse the membrane as a helical; Signal-anchor for type II membrane protein segment. The Extracellular segment spans residues 58–294 (CIYVLMQTID…KVEFKLTIQK (237 aa)). 5 N-linked (GlcNAc...) asparagine glycosylation sites follow: Asn-99, Asn-103, Asn-130, Asn-146, and Asn-161. Cys-131 and Cys-152 are joined by a disulfide. Cys-162 and Cys-178 are oxidised to a cystine. N-linked (GlcNAc...) asparagine glycans are attached at residues Asn-193 and Asn-225. Residues 194 to 294 (NTAPRVDCTF…KVEFKLTIQK (101 aa)) form an immunoglobulin-like region. Residues Cys-201 and Cys-266 are joined by a disulfide bond.

It belongs to the X(+)/potassium ATPases subunit beta family. In terms of assembly, the ATPase pump is composed of two subunits: alpha (catalytic) and beta (regulatory). Interacts with alpha subunit ATP12A; this interaction is required for the formation of a functionally active pump and targeting at the plasma membrane. Interacts (via N-terminus) with alpha subunit ATP4A (via the P-domain). Post-translationally, N-glycosylation is necessary for assembly and functional expression of the pump at the plasma membrane. In terms of tissue distribution, stomach.

Its subcellular location is the apical cell membrane. The protein localises to the cell membrane. Its function is as follows. The beta subunit of the gastric H(+)/K(+) ATPase pump which transports H(+) ions in exchange for K(+) ions across the apical membrane of parietal cells. Plays a structural and regulatory role in the assembly and membrane targeting of a functionally active pump. Within a transport cycle, the transfer of a H(+) ion across the membrane is coupled to ATP hydrolysis and is associated with a transient phosphorylation of the alpha subunit that shifts the pump conformation from inward-facing (E1) to outward-facing state (E2). Interacts with the phosphorylation domain of the alpha subunit and functions as a ratchet, stabilizing the lumenal-open E2 conformation and preventing the reverse reaction of the transport cycle. This is Potassium-transporting ATPase subunit beta (Atp4b) from Rattus norvegicus (Rat).